Here is a 406-residue protein sequence, read N- to C-terminus: Argininosuccinate synthase (406 aa).

Residues 11–19 and A38 contribute to the ATP site; that span reads AYSGGLDTS. The L-citrulline site is built by Y91 and S96. Residue G121 coordinates ATP. Residues T123, N127, and D128 each coordinate L-aspartate. Residue N127 participates in L-citrulline binding. The L-citrulline site is built by R131, S181, S190, E266, and Y278.

The protein belongs to the argininosuccinate synthase family. Type 1 subfamily. In terms of assembly, homotetramer.

Its subcellular location is the cytoplasm. The catalysed reaction is L-citrulline + L-aspartate + ATP = 2-(N(omega)-L-arginino)succinate + AMP + diphosphate + H(+). It participates in amino-acid biosynthesis; L-arginine biosynthesis; L-arginine from L-ornithine and carbamoyl phosphate: step 2/3. This chain is Argininosuccinate synthase, found in Campylobacter hominis (strain ATCC BAA-381 / DSM 21671 / CCUG 45161 / LMG 19568 / NCTC 13146 / CH001A).